A 230-amino-acid chain; its full sequence is MKFFALTTLLAATASALPTSNPAQELEARQLGRTTRDDLINGNSASCRDVIFIYARGSTETGNLGTLGPSIASNLESAFGKDGVWIQGVGGAYRATLGDNALPRGTSSAAIREMLGLFQQANTKCPDATLIAGGYSQGAALAAASIEDLDSAIRDKIAGTVLFGYTKNLQNRGRIPNYPADRTKVFCNTGDLVCTGSLIVAAPHLAYGPDARGPAPEFLIEKVRAVRGSA.

The first 16 residues, 1 to 16, serve as a signal peptide directing secretion; that stretch reads MKFFALTTLLAATASA. Residues 17–31 constitute a propeptide that is removed on maturation; it reads LPTSNPAQELEARQL. At G32 the chain carries N-D-glucuronoyl glycine. A disulfide bridge links C47 with C125. S136 functions as the Nucleophile in the catalytic mechanism. Cysteines 187 and 194 form a disulfide. D191 is an active-site residue. The active-site Proton donor/acceptor is the H204.

It belongs to the cutinase family. The 2 disulfide bonds play a critical role in holding the catalytic residues in juxta-position; reduction of the disulfide bridges results in the complete inactivation of the enzyme. Post-translationally, O-glycosylated; contains one mole each of mannose, arabinose, N-acetylglucosamine, and glucuronic acid.

It localises to the secreted. The catalysed reaction is cutin + H2O = cutin monomers.. With respect to regulation, inhibited by n-undecyl phosphonate (C11Y4). Inhibited by paraoxon. Its function is as follows. Catalyzes the hydrolysis of complex carboxylic polyesters found in the cell wall of plants. Degrades cutin, a macromolecule that forms the structure of the plant cuticle. Allows pathogenic fungi to penetrate through the cuticular barrier into the host plant during the initial stage of fungal infection. This chain is Cutinase 1 (CUT1), found in Fusarium vanettenii (Neocosmospora pisi).